The following is a 181-amino-acid chain: I-Kappa-B like protein C2 (181 aa).

ANK repeat units lie at residues 54–86 (DGKX…DINS), 91–121 (DGNT…DMEI), and 125–154 (ARKT…RCDV).

Belongs to the polydnaviridae I-Kappa-B-like protein family.

Its function is as follows. Suppresses the host immune response through NF-kappa-B inactivation. Possesses ankyrin repeat domains required for NF-kappa-B binding but lacks the regulatory regions required for dissociation from NF-kappa-B and degradation. Therefore, prevents host NF-kappa-B release and subsequent activation. The polypeptide is I-Kappa-B like protein C2 (C2) (Microplitis demolitor (Parasitoid wasp)).